The following is a 600-amino-acid chain: Elongation factor 4 (600 aa).

Residues 5–187 form the tr-type G domain; it reads KYIRNFSIIA…AIINKLPAPK (183 aa). GTP-binding positions include 17–22 and 134–137; these read DHGKST and NKID.

Belongs to the TRAFAC class translation factor GTPase superfamily. Classic translation factor GTPase family. LepA subfamily.

It is found in the cell inner membrane. It carries out the reaction GTP + H2O = GDP + phosphate + H(+). Required for accurate and efficient protein synthesis under certain stress conditions. May act as a fidelity factor of the translation reaction, by catalyzing a one-codon backward translocation of tRNAs on improperly translocated ribosomes. Back-translocation proceeds from a post-translocation (POST) complex to a pre-translocation (PRE) complex, thus giving elongation factor G a second chance to translocate the tRNAs correctly. Binds to ribosomes in a GTP-dependent manner. This chain is Elongation factor 4, found in Rickettsia prowazekii (strain Madrid E).